The sequence spans 492 residues: GTPase Der (492 aa).

Residues 3–166 form the EngA-type G 1 domain; sequence PVIALVGRPN…AVLGIFPKDA (164 aa). Residues 9–16, 56–60, and 118–121 contribute to the GTP site; these read GRPNVGKS, DTGGI, and NKVD. A disordered region spans residues 166 to 190; sequence AGEPEEGAEAEEEVQEGQEAKRIPG. Over residues 168-181 the composition is skewed to acidic residues; that stretch reads EPEEGAEAEEEVQE. Residues 197–370 enclose the EngA-type G 2 domain; it reads IKLAIIGRPN…SVQAAFHSAV (174 aa). Residues 203-210, 250-254, and 315-318 each bind GTP; these read GRPNVGKS, DTAGV, and NKWD. The KH-like domain maps to 371–455; the sequence is TRWPTSRLTQ…PIRIEYKGGE (85 aa). Residues 453–492 form a disordered region; the sequence is GGENPYEGNKNKLTDRQVNKKRRLMSHHKKAEKKRKDKRK. Residues 461–470 show a composition bias toward basic and acidic residues; the sequence is NKNKLTDRQV. Residues 471–492 show a composition bias toward basic residues; that stretch reads NKKRRLMSHHKKAEKKRKDKRK.

It belongs to the TRAFAC class TrmE-Era-EngA-EngB-Septin-like GTPase superfamily. EngA (Der) GTPase family. In terms of assembly, associates with the 50S ribosomal subunit.

GTPase that plays an essential role in the late steps of ribosome biogenesis. In Ectopseudomonas mendocina (strain ymp) (Pseudomonas mendocina), this protein is GTPase Der.